The sequence spans 314 residues: Methionyl-tRNA formyltransferase (314 aa).

A (6S)-5,6,7,8-tetrahydrofolate-binding site is contributed by 110-113 (SLLP).

The protein belongs to the Fmt family.

The enzyme catalyses L-methionyl-tRNA(fMet) + (6R)-10-formyltetrahydrofolate = N-formyl-L-methionyl-tRNA(fMet) + (6S)-5,6,7,8-tetrahydrofolate + H(+). Attaches a formyl group to the free amino group of methionyl-tRNA(fMet). The formyl group appears to play a dual role in the initiator identity of N-formylmethionyl-tRNA by promoting its recognition by IF2 and preventing the misappropriation of this tRNA by the elongation apparatus. In Bacillus cereus (strain G9842), this protein is Methionyl-tRNA formyltransferase.